Consider the following 217-residue polypeptide: MSQETVLASIEEAIDKSLKLGRGKRFKQSVEIIVALKDIDLKSPQARIRETVFLPNRPPKEAKVCVVAHGDMELQAKEAGVEVLNRQDLQNLSQNKREVKKLARRCYWVLVRADLMGLAGRILGPALGPRGKAPVPVPPNANIKDLIERYKAAVWVRIRNQPQVMARIGTEDMSPRELAENALAVLQVIENRLGRGKISRIYVKKTMGPPVEVPAIG.

The protein belongs to the universal ribosomal protein uL1 family. As to quaternary structure, part of the 50S ribosomal subunit.

In terms of biological role, binds directly to 23S rRNA. Probably involved in E site tRNA release. Protein L1 is also a translational repressor protein, it controls the translation of its operon by binding to its mRNA. The chain is Large ribosomal subunit protein uL1 from Aeropyrum pernix (strain ATCC 700893 / DSM 11879 / JCM 9820 / NBRC 100138 / K1).